Reading from the N-terminus, the 332-residue chain is Methionine synthase (332 aa).

Residues His-211, Cys-213, and Cys-296 each contribute to the Zn(2+) site.

It belongs to the archaeal MetE family. It depends on Zn(2+) as a cofactor.

It functions in the pathway amino-acid biosynthesis; L-methionine biosynthesis via de novo pathway. Functionally, catalyzes the transfer of a methyl group to L-homocysteine resulting in methionine formation. The physiological methyl donor is unknown. This Saccharolobus islandicus (strain L.S.2.15 / Lassen #1) (Sulfolobus islandicus) protein is Methionine synthase.